A 304-amino-acid polypeptide reads, in one-letter code: Non-specific ribonucleoside hydrolase RihC (304 aa).

Residue His235 is part of the active site.

It belongs to the IUNH family. RihC subfamily.

Its function is as follows. Hydrolyzes both purine and pyrimidine ribonucleosides with a broad-substrate specificity. The sequence is that of Non-specific ribonucleoside hydrolase RihC from Salmonella paratyphi A (strain ATCC 9150 / SARB42).